A 474-amino-acid chain; its full sequence is Capsid vertex component 1 (474 aa).

This sequence belongs to the herpesviridae CVC1 protein family. Interacts (via C-terminus) with capsid vertex component 2/CVC2.

The protein resides in the virion. The protein localises to the host nucleus. Functionally, capsid vertex-specific component that plays a role during viral DNA encapsidation, assuring correct genome cleavage and presumably stabilizing capsids that contain full-length viral genomes. This is Capsid vertex component 1 from Alcelaphine herpesvirus 1 (strain C500) (AlHV-1).